The sequence spans 192 residues: Xanthine phosphoribosyltransferase (192 aa).

Xanthine contacts are provided by Leu-20 and Asn-27. 5-phospho-alpha-D-ribose 1-diphosphate is bound at residue 128 to 132 (ANGDA). Xanthine is bound at residue Lys-156.

Belongs to the purine/pyrimidine phosphoribosyltransferase family. Xpt subfamily. Homodimer.

The protein resides in the cytoplasm. It carries out the reaction XMP + diphosphate = xanthine + 5-phospho-alpha-D-ribose 1-diphosphate. It participates in purine metabolism; XMP biosynthesis via salvage pathway; XMP from xanthine: step 1/1. Functionally, converts the preformed base xanthine, a product of nucleic acid breakdown, to xanthosine 5'-monophosphate (XMP), so it can be reused for RNA or DNA synthesis. The chain is Xanthine phosphoribosyltransferase from Staphylococcus epidermidis (strain ATCC 35984 / DSM 28319 / BCRC 17069 / CCUG 31568 / BM 3577 / RP62A).